Here is a 519-residue protein sequence, read N- to C-terminus: MDLVGVSSPEPGPAAAWGPSKCPWATPQNTVSCSLTEVMSEELAKELQLEEEAAAFPEVVVAEGPFISGENIDTSSDLMLAQMLQMEFDREYDAQLRREEKKFNGDSKVSISFENYRKVHPFEDSDSSEDEVDWQDTRDDPYRPAKPIPTPKKGFIGKGKDITTKHDEVVCGRKNTARMENFAPGFQVGDGIGMDLKLSNHVFNALKQHAYSEERRSARLHEKKEHSTAEKAVDPKTRLLMYKMVNSGMLETITGCISTGKESVVFHAYGGSLEDEKEDGKAIPTECAIKVFKTTLNEFKNRDKYIKDDFRFKDRFSKLNPRKIIRMWAEKEMHNLTRMQKAGIPCPTVVLLKKHILVMSFIGHDQVPAPKLKEVKLSNEEMKDAYYQTLHLMQQLYNECTLVHADLSEYNMLWHAGKVWLIDVSQSVEPTHPHGLEFLFRDCRNVSQFFQKGGVTEALNERELFNAVSGLNISADNEADFLAEIEALEKMNEDHIQKNGRKAASFLKDDGSPPVLSAD.

A phosphoserine mark is found at S8, S112, S125, S127, and S128. Residues 122–159 (FEDSDSSEDEVDWQDTRDDPYRPAKPIPTPKKGFIGKG) are disordered. Residues 124–134 (DSDSSEDEVDW) are compositionally biased toward acidic residues. Residues 251–519 (ETITGCISTG…DGSPPVLSAD (269 aa)) form the Protein kinase domain. ATP is bound by residues 257–265 (ISTGKESVV) and K290. The Proton acceptor role is filled by D406. The residue at position 512 (S512) is a Phosphoserine.

This sequence belongs to the protein kinase superfamily. RIO-type Ser/Thr kinase family. As to quaternary structure, interacts with CASP10. Interacts with IRF3; RIOK3 probably mediates the interaction of TBK1 with IRF3. Associated with 40S pre-ribosomal particles. Mg(2+) serves as cofactor. In terms of processing, autophosphorylated (in vitro).

It is found in the cytoplasm. The enzyme catalyses L-seryl-[protein] + ATP = O-phospho-L-seryl-[protein] + ADP + H(+). The catalysed reaction is L-threonyl-[protein] + ATP = O-phospho-L-threonyl-[protein] + ADP + H(+). Functionally, involved in regulation of type I interferon (IFN)-dependent immune response which plays a critical role in the innate immune response against DNA and RNA viruses. May act as an adapter protein essential for the recruitment of TBK1 to IRF3. Phosphorylates IFIH1 on 'Ser-828' interfering with IFIH1 filament assembly on long dsRNA and resulting in attenuated IFIH1-signaling. Can inhibit CASP10 isoform 7-mediated activation of the NF-kappaB signaling pathway. May play a role in the biogenesis of the 40S ribosomal subunit. Involved in the processing of 21S pre-rRNA to the mature 18S rRNA. This Mus musculus (Mouse) protein is Serine/threonine-protein kinase RIO3 (Riok3).